A 156-amino-acid chain; its full sequence is SsrA-binding protein (156 aa).

Belongs to the SmpB family.

It is found in the cytoplasm. Its function is as follows. Required for rescue of stalled ribosomes mediated by trans-translation. Binds to transfer-messenger RNA (tmRNA), required for stable association of tmRNA with ribosomes. tmRNA and SmpB together mimic tRNA shape, replacing the anticodon stem-loop with SmpB. tmRNA is encoded by the ssrA gene; the 2 termini fold to resemble tRNA(Ala) and it encodes a 'tag peptide', a short internal open reading frame. During trans-translation Ala-aminoacylated tmRNA acts like a tRNA, entering the A-site of stalled ribosomes, displacing the stalled mRNA. The ribosome then switches to translate the ORF on the tmRNA; the nascent peptide is terminated with the 'tag peptide' encoded by the tmRNA and targeted for degradation. The ribosome is freed to recommence translation, which seems to be the essential function of trans-translation. The sequence is that of SsrA-binding protein from Staphylococcus haemolyticus (strain JCSC1435).